The chain runs to 60 residues: Ribosome biogenesis protein Nop10 (60 aa).

The tract at residues 29–60 (CDGPTENSAPAPFSPEDPYGEYRRRVRRRASE) is disordered.

This sequence belongs to the NOP10 family.

Involved in ribosome biogenesis; more specifically in 18S rRNA pseudouridylation and in cleavage of pre-rRNA. The sequence is that of Ribosome biogenesis protein Nop10 from Halorubrum lacusprofundi (strain ATCC 49239 / DSM 5036 / JCM 8891 / ACAM 34).